The chain runs to 430 residues: Tektin-2 (430 aa).

Coiled-coil stretches lie at residues 75–162 (KEML…FQHL) and 226–380 (KNRA…IACK).

This sequence belongs to the tektin family. Microtubule inner protein component of sperm flagellar doublet microtubules. May interact with CCDC172. In terms of processing, tyrosine phosphorylated. Post-translationally, ubiquitinated, leading to its degradation. Deubiquitinated by USP16, promoting its stability.

The protein resides in the cytoplasm. It localises to the cytoskeleton. Its subcellular location is the cilium axoneme. It is found in the flagellum axoneme. The protein localises to the microtubule organizing center. Microtubule inner protein (MIP) part of the dynein-decorated doublet microtubules (DMTs) in cilia and flagellar axoneme. Plays a key role in the assembly or attachment of the inner dynein arm to microtubules in sperm flagella and tracheal cilia. Forms filamentous polymers in the walls of ciliary and flagellar microtubules. In Rattus norvegicus (Rat), this protein is Tektin-2 (Tekt2).